The sequence spans 107 residues: Ferredoxin 1 (107 aa).

2 consecutive 4Fe-4S ferredoxin-type domains span residues 2–30 and 31–60; these read TFVVTDNCIKCKYTDCVEVCPVDCFYEGP and NFLVIHPDECIDCALCEPECPAQAIFSEDE. Positions 9 and 17 each coordinate [3Fe-4S] cluster. 4 residues coordinate [4Fe-4S] cluster: C21, C40, C43, and C46. C50 contributes to the [3Fe-4S] cluster binding site.

It depends on [4Fe-4S] cluster as a cofactor. [3Fe-4S] cluster is required as a cofactor.

In terms of biological role, ferredoxins are iron-sulfur proteins that transfer electrons in a wide variety of metabolic reactions. In Stutzerimonas stutzeri (Pseudomonas stutzeri), this protein is Ferredoxin 1.